The primary structure comprises 305 residues: UDP-3-O-acyl-N-acetylglucosamine deacetylase (305 aa).

Residues His78, His237, and Asp241 each coordinate Zn(2+). His264 functions as the Proton donor in the catalytic mechanism.

Belongs to the LpxC family. It depends on Zn(2+) as a cofactor.

The catalysed reaction is a UDP-3-O-[(3R)-3-hydroxyacyl]-N-acetyl-alpha-D-glucosamine + H2O = a UDP-3-O-[(3R)-3-hydroxyacyl]-alpha-D-glucosamine + acetate. It participates in glycolipid biosynthesis; lipid IV(A) biosynthesis; lipid IV(A) from (3R)-3-hydroxytetradecanoyl-[acyl-carrier-protein] and UDP-N-acetyl-alpha-D-glucosamine: step 2/6. In terms of biological role, catalyzes the hydrolysis of UDP-3-O-myristoyl-N-acetylglucosamine to form UDP-3-O-myristoylglucosamine and acetate, the committed step in lipid A biosynthesis. The chain is UDP-3-O-acyl-N-acetylglucosamine deacetylase from Burkholderia ambifaria (strain ATCC BAA-244 / DSM 16087 / CCUG 44356 / LMG 19182 / AMMD) (Burkholderia cepacia (strain AMMD)).